We begin with the raw amino-acid sequence, 478 residues long: Monocarboxylate transporter 2 (478 aa).

At 1–15 the chain is on the cytoplasmic side; that stretch reads MPPMPSAPPVHPPPD. A helical transmembrane segment spans residues 16 to 36; that stretch reads GGWGWIVVGAAFISIGFSYAF. Residues 37-59 lie on the Extracellular side of the membrane; sequence PKAVTVFFKEIQQIFHTTYSEIA. A helical membrane pass occupies residues 60–80; it reads WISSIMLAVMYAGGPVSSVLV. At 81–89 the chain is on the cytoplasmic side; it reads NKYGSRPVV. Residues 90–110 traverse the membrane as a helical segment; sequence IAGGLLCCLGMVLASFSSSVV. At 111 to 115 the chain is on the extracellular side; it reads QLYLT. The helical transmembrane segment at 116-136 threads the bilayer; the sequence is MGFITGLGLAFNLQPALTIIG. Topologically, residues 137–148 are cytoplasmic; that stretch reads KYFYRKRPMANG. Residues 149 to 169 traverse the membrane as a helical segment; it reads LAMAGSPVFLSSLAPFNQYLF. Residues 170-173 are Extracellular-facing; sequence NTFG. The chain crosses the membrane as a helical span at residues 174-194; the sequence is WKGSFLILGSLLLNACVAGSL. Residues 195–246 are Cytoplasmic-facing; the sequence is MRPLGPNQTTSKSKNKTGKTEDDSSPKKIKTKKSTWEKVNKYLDFSLFKHRG. Residues 200–224 are disordered; sequence PNQTTSKSKNKTGKTEDDSSPKKIK. Residues 247 to 267 traverse the membrane as a helical segment; that stretch reads FLIYLSGNVIMFLGFFAPIIF. Over 268 to 282 the chain is Extracellular; sequence LAPYAKDQGIDEYSA. A helical membrane pass occupies residues 283 to 303; it reads AFLLSVMAFVDMFARPSVGLI. Over 304-312 the chain is Cytoplasmic; the sequence is ANSKYIRPR. A helical transmembrane segment spans residues 313-333; sequence IQYFFSFAIMFNGVCHLLCPL. Over 334–338 the chain is Extracellular; sequence AQDYT. A helical transmembrane segment spans residues 339 to 359; sequence SLVLYAVFFGLGFGSVSSVLF. The Cytoplasmic segment spans residues 360-373; that stretch reads ETLMDLVGAPRFSS. The chain crosses the membrane as a helical span at residues 374 to 394; sequence AVGLVTIVECGPVLLGPPLAG. Residues 395-406 are Extracellular-facing; the sequence is KLVDLTGEYKYM. Residues 407-427 form a helical membrane-spanning segment; sequence YMSCGAIVVAASVWLLIGNAI. Residues 428–478 are Cytoplasmic-facing; sequence NYRLLAKERKEENARQKTRESEPLSKSKHSEDVNVKVSNAQSVTSERETNI. A compositionally biased stretch (basic and acidic residues) spans 437–461; the sequence is KEENARQKTRESEPLSKSKHSEDVN. Residues 437–478 form a disordered region; the sequence is KEENARQKTRESEPLSKSKHSEDVNVKVSNAQSVTSERETNI.

The protein belongs to the major facilitator superfamily. Monocarboxylate porter (TC 2.A.1.13) family. Homodimer. Interacts with GRID2IP. Interacts with EMB; interaction mediates SLC16A7 targeting to the plasma membrane. Interacts with isoform 2 of BSG. In terms of tissue distribution, detected in heart and in blood lymphocytes and monocytes (at protein level). High expression in testis, moderate to low in spleen, heart, kidney, pancreas, skeletal muscle, brain and leukocyte. Restricted expression in normal tissues, but widely expressed in cancer cells.

The protein localises to the cell membrane. The protein resides in the basolateral cell membrane. Its subcellular location is the cytoplasm. The catalysed reaction is pyruvate(out) + H(+)(out) = pyruvate(in) + H(+)(in). The enzyme catalyses 3-methyl-2-oxobutanoate(out) + H(+)(out) = 3-methyl-2-oxobutanoate(in) + H(+)(in). It catalyses the reaction (S)-lactate(in) + H(+)(in) = (S)-lactate(out) + H(+)(out). It carries out the reaction acetoacetate(out) + H(+)(out) = acetoacetate(in) + H(+)(in). The catalysed reaction is (R)-3-hydroxybutanoate(out) + H(+)(out) = (R)-3-hydroxybutanoate(in) + H(+)(in). The enzyme catalyses 4-methyl-2-oxopentanoate(out) + H(+)(out) = 4-methyl-2-oxopentanoate(in) + H(+)(in). It catalyses the reaction (S)-3-hydroxybutanoate(out) + H(+)(out) = (S)-3-hydroxybutanoate(in) + H(+)(in). With respect to regulation, transport activity exhibits steep dependence on substrate concentration. Substrate concentration sensitivity of SLC16A7 arises from the strong inter-subunit cooperativity of the SLC16A7 dimer during transport. Inhibited by AR-C155858. Proton-coupled monocarboxylate symporter. Catalyzes the rapid transport across the plasma membrane of monocarboxylates such as L-lactate, pyruvate and ketone bodies, acetoacetate, beta-hydroxybutyrate and acetate. Dimerization is functionally required and both subunits work cooperatively in transporting substrate. The sequence is that of Monocarboxylate transporter 2 from Homo sapiens (Human).